We begin with the raw amino-acid sequence, 420 residues long: MGQETEISKRYQVAKERYQAIGVDTEKALKTLKDIKISMHCWQGDDVKGFLNPDGELTGGIMATGNYPGAAHTPKQLRQDLEKAYSLIPGKHKLNLHAIYVDTDEKVDLNEIEPKHFTPWVEWAKEQGLGLDFNPTFFSHPMFKDNYTLASPDKEVRDFWIEHGKRSRKISEYFGKELGQTSINNFWVPDGIKDCPIDRYTPRKRLMEALDEVFAEKLDEKYTQEAVESKLFGLGAEAYTVGSHEFYMGYGITRDKLICLDAGHFHPTEVISNKLSSLALFSKGVMLHVSRPVRWDSDHVVIMDDELIEIGRELVRNDLLGITNIGLDFFDATINRIAAWVVGTRNTQKSLLKALLEPTADLKKMELENDFTSRMAITEELKDFPFGDVWNYFCEINGVPVGLDWLKEVKAYEEDVLLKR.

H264, D296, and D298 together coordinate Mn(2+).

The protein belongs to the rhamnose isomerase family. It depends on Mn(2+) as a cofactor.

Its subcellular location is the cytoplasm. It carries out the reaction L-rhamnopyranose = L-rhamnulose. It functions in the pathway carbohydrate degradation; L-rhamnose degradation; glycerone phosphate from L-rhamnose: step 1/3. Catalyzes the interconversion of L-rhamnose and L-rhamnulose. The chain is L-rhamnose isomerase from Listeria monocytogenes serotype 4b (strain CLIP80459).